The sequence spans 256 residues: Cell division protein DivIB (256 aa).

Topologically, residues 1–30 (MNNSKVIKLQDRVPKLKNQKKKNKKNVNHR) are cytoplasmic. Residues 31–51 (LILYISILFLLVLFLIYFRSP) traverse the membrane as a helical segment. The Extracellular segment spans residues 52–256 (LSNIKKISVF…KELGAEEKKE (205 aa)). The region spanning 53-121 (SNIKKISVFG…NNIDIHIEEY (69 aa)) is the POTRA domain.

Belongs to the FtsQ/DivIB family. DivIB subfamily.

It localises to the cell membrane. Its function is as follows. Cell division protein that may be involved in stabilizing or promoting the assembly of the division complex. The chain is Cell division protein DivIB from Bacillus cereus (strain ATCC 14579 / DSM 31 / CCUG 7414 / JCM 2152 / NBRC 15305 / NCIMB 9373 / NCTC 2599 / NRRL B-3711).